A 615-amino-acid chain; its full sequence is Homologous recombination OB-fold protein (615 aa).

3 disordered regions span residues 42–75 (LRPVSSRPQETVQTQSSRPVPSYPTSNQSVPRLC), 213–326 (PWPS…PVTQ), and 546–590 (DFLE…FPEE). S47 carries the phosphoserine modification. 3 stretches are compositionally biased toward polar residues: residues 47 to 71 (SRPQETVQTQSSRPVPSYPTSNQSV), 232 to 241 (SCVSTSQQRG), and 257 to 275 (IRSSPQNYGPGQPLQSPRA). The span at 302–317 (SSRAPVSSVESPVSTP) shows a compositional bias: low complexity.

Interacts with MCM8; this interaction is necessary for MCM8-MCM9 helicase complex recruitment to DNA damage sites. Interacts with RPA1; this interaction associates HROB with the RPA complex.

The protein resides in the nucleus. The protein localises to the chromosome. Its function is as follows. DNA-binding protein involved in homologous recombination that acts by recruiting the MCM8-MCM9 helicase complex to sites of DNA damage to promote DNA repair synthesis. The chain is Homologous recombination OB-fold protein from Mus musculus (Mouse).